Here is an 82-residue protein sequence, read N- to C-terminus: Large ribosomal subunit protein bL31B (82 aa).

It belongs to the bacterial ribosomal protein bL31 family. Type B subfamily. As to quaternary structure, part of the 50S ribosomal subunit.

This chain is Large ribosomal subunit protein bL31B, found in Acinetobacter baylyi (strain ATCC 33305 / BD413 / ADP1).